The primary structure comprises 449 residues: Probable phosphoglucosamine mutase (449 aa).

Ser96 functions as the Phosphoserine intermediate in the catalytic mechanism. Mg(2+)-binding residues include Ser96, Asp233, Asp235, and Asp237. At Ser96 the chain carries Phosphoserine.

The protein belongs to the phosphohexose mutase family. Mg(2+) is required as a cofactor. In terms of processing, activated by phosphorylation.

It carries out the reaction alpha-D-glucosamine 1-phosphate = D-glucosamine 6-phosphate. Catalyzes the conversion of glucosamine-6-phosphate to glucosamine-1-phosphate. Does not display phosphoglucomutase (PGM) or phosphomannomutase (PMM) activities. This chain is Probable phosphoglucosamine mutase (glmM), found in Thermococcus kodakarensis (strain ATCC BAA-918 / JCM 12380 / KOD1) (Pyrococcus kodakaraensis (strain KOD1)).